A 283-amino-acid chain; its full sequence is 5'-nucleotidase SurE (283 aa).

A divalent metal cation is bound by residues aspartate 14, aspartate 15, serine 47, and asparagine 105.

The protein belongs to the SurE nucleotidase family. Requires a divalent metal cation as cofactor.

The protein localises to the cytoplasm. The catalysed reaction is a ribonucleoside 5'-phosphate + H2O = a ribonucleoside + phosphate. Functionally, nucleotidase that shows phosphatase activity on nucleoside 5'-monophosphates. The chain is 5'-nucleotidase SurE from Chlamydia muridarum (strain MoPn / Nigg).